Reading from the N-terminus, the 424-residue chain is Adenylosuccinate synthetase (424 aa).

Residues 12–18 (GDEGKGK) and 40–42 (GHT) each bind GTP. The Proton acceptor role is filled by D13. D13 and G40 together coordinate Mg(2+). IMP is bound by residues 13–16 (DEGK), 38–41 (NAGH), T128, R142, Q223, T238, and R302. The Proton donor role is filled by H41. Residue 298-304 (TTTGRPR) participates in substrate binding. Residues R304, 330 to 332 (HVD), and 412 to 414 (GVG) contribute to the GTP site.

This sequence belongs to the adenylosuccinate synthetase family. In terms of assembly, homodimer. Requires Mg(2+) as cofactor.

The protein localises to the cytoplasm. The enzyme catalyses IMP + L-aspartate + GTP = N(6)-(1,2-dicarboxyethyl)-AMP + GDP + phosphate + 2 H(+). The protein operates within purine metabolism; AMP biosynthesis via de novo pathway; AMP from IMP: step 1/2. Plays an important role in the de novo pathway of purine nucleotide biosynthesis. Catalyzes the first committed step in the biosynthesis of AMP from IMP. The protein is Adenylosuccinate synthetase of Acetivibrio thermocellus (strain ATCC 27405 / DSM 1237 / JCM 9322 / NBRC 103400 / NCIMB 10682 / NRRL B-4536 / VPI 7372) (Clostridium thermocellum).